We begin with the raw amino-acid sequence, 335 residues long: MAVKVGINGFGRIGRNVFRAALNNPEVEVVAVNDLTDANMLAHLLQYDSVHGKLDAEVSVDGNNLVVNGKTIEVSAERDPAKLSWGKQGVEIVVESTGFFTKRADAAKHLEAGAKKVIISAPANEEDITIVMGVNEDKYDAANHDVISNASCTTNCLAPFAKVLNDKFGIKRGMMTTVHSYTNDQQILDLPHKDYRRARAAAENIIPTSTGAAKAVSLVLPELKGKLNGGAMRVPTPNVSLVDLVAELNQEVTAEEVNAALKEAAEGDLKGILGYSEEPLVSGDYNGNKNSSTIDALSTMVMEGSMVKVISWYDNESGYSNRVVDLAAYIAKKGL.

NAD(+) contacts are provided by residues 12-13 (RI), Asp34, Arg78, and Ser120. D-glyceraldehyde 3-phosphate is bound by residues 151-153 (SCT) and Thr182. Cys152 (nucleophile) is an active-site residue. Asn183 lines the NAD(+) pocket. Residues Arg197, 210-211 (TG), and Arg233 each bind D-glyceraldehyde 3-phosphate. Asn315 serves as a coordination point for NAD(+).

Belongs to the glyceraldehyde-3-phosphate dehydrogenase family. Homotetramer. Interacts with BrxC. In response to oxidative stress, the active site Cys likely reacts with bacillithiol (BSH) to form mixed disulfides to protect the Cys residue against overoxidation. S-bacillithiolation presumably leads to loss of catalytic activity. Debacillithiolation by monothiol bacilliredoxin BrxC restores the activity.

The protein resides in the cytoplasm. The enzyme catalyses D-glyceraldehyde 3-phosphate + phosphate + NAD(+) = (2R)-3-phospho-glyceroyl phosphate + NADH + H(+). The protein operates within carbohydrate degradation; glycolysis; pyruvate from D-glyceraldehyde 3-phosphate: step 1/5. Involved in the glycolysis. Catalyzes the oxidative phosphorylation of glyceraldehyde 3-phosphate (G3P) to 1,3-bisphosphoglycerate (BPG) using the cofactor NAD. The first reaction step involves the formation of a hemiacetal intermediate between G3P and a cysteine residue, and this hemiacetal intermediate is then oxidized to a thioester, with concomitant reduction of NAD to NADH. The reduced NADH is then exchanged with the second NAD, and the thioester is attacked by a nucleophilic inorganic phosphate to produce BPG. The polypeptide is Glyceraldehyde-3-phosphate dehydrogenase 1 (Bacillus subtilis (strain 168)).